A 444-amino-acid chain; its full sequence is Proline--tRNA ligase (444 aa).

It belongs to the class-II aminoacyl-tRNA synthetase family. ProS type 2 subfamily. As to quaternary structure, homodimer.

The protein resides in the cytoplasm. The enzyme catalyses tRNA(Pro) + L-proline + ATP = L-prolyl-tRNA(Pro) + AMP + diphosphate. Functionally, catalyzes the attachment of proline to tRNA(Pro) in a two-step reaction: proline is first activated by ATP to form Pro-AMP and then transferred to the acceptor end of tRNA(Pro). This is Proline--tRNA ligase from Maricaulis maris (strain MCS10) (Caulobacter maris).